A 627-amino-acid polypeptide reads, in one-letter code: Alpha-terpineol synthase, chloroplastic (627 aa).

The N-terminal 53 residues, 1–53 (MAGITGVMNMKLAARPSSGRHSRGCRPAVVPSAGKQMLLVRRHPPGSASWPTR), are a transit peptide targeting the chloroplast. Residues 13–90 (AARPSSGRHS…EDRASRNTSS (78 aa)) form a disordered region. Residues Arg339, Asp376, Asp380, Arg518, and Asp521 each contribute to the (2E)-geranyl diphosphate site. Mg(2+) contacts are provided by Asp376 and Asp380. Positions 376-380 (DDTYD) match the DDXXD motif motif. 3 residues coordinate Mg(2+): Asp521, Ser525, and Glu529.

This sequence belongs to the terpene synthase family. Tpsb subfamily. As to quaternary structure, monomer. The cofactor is Mg(2+). It depends on Mn(2+) as a cofactor. In terms of tissue distribution, expressed in seedling leaf sheaths and roots.

Its subcellular location is the plastid. It localises to the chloroplast. It carries out the reaction (2E)-geranyl diphosphate + H2O = (S)-alpha-terpineol + diphosphate. It catalyses the reaction (2E)-geranyl diphosphate = (4S)-limonene + diphosphate. The catalysed reaction is (2E)-geranyl diphosphate = gamma-terpinene + diphosphate. The enzyme catalyses (2E)-geranyl diphosphate = beta-myrcene + diphosphate. It carries out the reaction (2E)-geranyl diphosphate = terpinolene + diphosphate. It catalyses the reaction (2E)-geranyl diphosphate + H2O = 4-terpineol + diphosphate. Its pathway is secondary metabolite biosynthesis; terpenoid biosynthesis. Its function is as follows. Component of the volatile terpenes biosynthesis pathways. Mediates the synthesis of a blend of monoterpenes. Converts mainly geranyl diphosphate to alpha-terpineol. Also triggers the biosynthesis of minor monoterpenes including limonene, gamma-terpinene, beta-myrcene, terpinolene and 4-terpineol. The chain is Alpha-terpineol synthase, chloroplastic from Zea mays (Maize).